The sequence spans 204 residues: Large ribosomal subunit protein uL4 (204 aa).

The span at 42 to 52 (GTKAQKSRSQV) shows a compositional bias: polar residues. Positions 42 to 70 (GTKAQKSRSQVSGTTKKSKKQKGGGARHG) are disordered.

Belongs to the universal ribosomal protein uL4 family. In terms of assembly, part of the 50S ribosomal subunit.

Functionally, one of the primary rRNA binding proteins, this protein initially binds near the 5'-end of the 23S rRNA. It is important during the early stages of 50S assembly. It makes multiple contacts with different domains of the 23S rRNA in the assembled 50S subunit and ribosome. In terms of biological role, forms part of the polypeptide exit tunnel. The protein is Large ribosomal subunit protein uL4 of Xylella fastidiosa (strain M12).